We begin with the raw amino-acid sequence, 482 residues long: MKGLFIRIVLAICLSLWAIDMVFPWQQIVRSKQNYHTTIQERQKLIVGTINNPVSYFIGTNGETGLEYELSKAFANYLNVDLEMFPLNSADALFQALAQGKIDIAAASLFYQQDRSEKFKLGPAYHAASWQLTYRKGERRPITLENLSGKLVIPANSALNNILLAKKEKYPSLTWETSELSQEELLFQVAEGKIDYTIATSTEVSVNQQIKPQIAIAFNVTDEFTVHWYLSDKGSSELQAALLDFMNSAIENGLIARIEEKYFNHLNQFDYVDTRSYLNAIETVLPKYAPLFEKYKGDLDWRLLAAISYQESHWNPEATSPTGVRGMMMLTKATADRMNITNRLDPEQSIKAGSEYLHLLLKQMPDTILKEDRIWFALAAYNMGLGHLLDVRRLTKQLGGNPDNWLEVKKNLPLLAQKRYFTHLKYGYARGYEAFQYVENIRRYMNSIMNYYRLQQNQQDRQDRYENENNDVISTQTQQEQR.

The N-terminal stretch at 1–18 is a signal peptide; it reads MKGLFIRIVLAICLSLWA. The interval 19-266 is non-LT domain; it reads IDMVFPWQQI…RIEEKYFNHL (248 aa). The tract at residues 267-482 is LT domain; it reads NQFDYVDTRS…ISTQTQQEQR (216 aa). Glu311 is a catalytic residue.

It in the N-terminal section; belongs to the bacterial solute-binding protein 3 family. In the C-terminal section; belongs to the transglycosylase Slt family.

It is found in the cell outer membrane. The catalysed reaction is Exolytic cleavage of the (1-&gt;4)-beta-glycosidic linkage between N-acetylmuramic acid (MurNAc) and N-acetylglucosamine (GlcNAc) residues in peptidoglycan, from either the reducing or the non-reducing ends of the peptidoglycan chains, with concomitant formation of a 1,6-anhydrobond in the MurNAc residue.. In terms of biological role, murein-degrading enzyme that degrades murein glycan strands and insoluble, high-molecular weight murein sacculi, with the concomitant formation of a 1,6-anhydromuramoyl product. Lytic transglycosylases (LTs) play an integral role in the metabolism of the peptidoglycan (PG) sacculus. Their lytic action creates space within the PG sacculus to allow for its expansion as well as for the insertion of various structures such as secretion systems and flagella. The protein is Membrane-bound lytic murein transglycosylase F of Histophilus somni (strain 129Pt) (Haemophilus somnus).